The chain runs to 354 residues: Type II restriction enzyme BanI (354 aa).

In terms of assembly, homodimer.

It catalyses the reaction Endonucleolytic cleavage of DNA to give specific double-stranded fragments with terminal 5'-phosphates.. A P subtype restriction enzyme that recognizes the double-stranded sequence 5'-GGYRCC-3' and cleaves after G-1. The chain is Type II restriction enzyme BanI (banIR) from Aneurinibacillus aneurinilyticus (Bacillus aneurinolyticus).